A 262-amino-acid chain; its full sequence is Undecaprenyl-diphosphatase (262 aa).

Transmembrane regions (helical) follow at residues 15-35 (LTEWLPISSSGHLVLLQIILL), 38-58 (SSAAFIALVHAGTLLAVIVAF), 91-111 (LYILIGTVPVAVLGLALAKYV), 114-134 (IFGSSKIVGVGLLITAALLYS), 149-169 (ALIVGLAQSIAIFPGISRSGA), 189-209 (FLLSIPALTGFLILELIVSPA), 219-239 (VGLLSSFITGLIAIKFLLSII), and 242-262 (GRLHLFSYYCVIVGIAILSLL).

This sequence belongs to the UppP family.

The protein localises to the cell membrane. It carries out the reaction di-trans,octa-cis-undecaprenyl diphosphate + H2O = di-trans,octa-cis-undecaprenyl phosphate + phosphate + H(+). Its function is as follows. Catalyzes the dephosphorylation of undecaprenyl diphosphate (UPP). This is Undecaprenyl-diphosphatase from Korarchaeum cryptofilum (strain OPF8).